We begin with the raw amino-acid sequence, 178 residues long: Dual-action ribosomal maturation protein DarP (178 aa).

It belongs to the DarP family.

Its subcellular location is the cytoplasm. Its function is as follows. Member of a network of 50S ribosomal subunit biogenesis factors which assembles along the 30S-50S interface, preventing incorrect 23S rRNA structures from forming. Promotes peptidyl transferase center (PTC) maturation. The polypeptide is Dual-action ribosomal maturation protein DarP (Mannheimia succiniciproducens (strain KCTC 0769BP / MBEL55E)).